The chain runs to 458 residues: Argininosuccinate lyase (458 aa).

This sequence belongs to the lyase 1 family. Argininosuccinate lyase subfamily.

It localises to the cytoplasm. The enzyme catalyses 2-(N(omega)-L-arginino)succinate = fumarate + L-arginine. Its pathway is amino-acid biosynthesis; L-arginine biosynthesis; L-arginine from L-ornithine and carbamoyl phosphate: step 3/3. The polypeptide is Argininosuccinate lyase (Geobacter metallireducens (strain ATCC 53774 / DSM 7210 / GS-15)).